Reading from the N-terminus, the 1036-residue chain is Serine/threonine-protein kinase ULK2 (1036 aa).

In terms of domain architecture, Protein kinase spans 9–271; it reads YSKRDLVGHG…FEAFFSHPFL (263 aa). Residues 15–23 and Lys39 contribute to the ATP site; that span reads VGHGAFAVV. Asp131 acts as the Proton acceptor in catalysis. 5 disordered regions span residues 319-348, 418-460, 491-522, 540-588, and 656-695; these read ENLSSPPLGPPNYLQVSKDSASTSSKNSSC, TSTA…ADTA, CCCGHPQGHDSRSRNSSGSPVPQAQSPQSLLS, QKLR…SSDW, and AEQQSKAVFGRSVSTGKLSDQQGKTPICRHQGSTDSLNTE. Residues 335–348 are compositionally biased toward low complexity; sequence SKDSASTSSKNSSC. The span at 418-428 shows a compositional bias: polar residues; it reads TSTASSGTNVH. Residue Ser430 is modified to Phosphoserine. A compositionally biased stretch (polar residues) spans 504-521; sequence RNSSGSPVPQAQSPQSLL. Residues 659 to 679 are compositionally biased toward polar residues; it reads QSKAVFGRSVSTGKLSDQQGK. A phosphoserine mark is found at Ser771 and Ser780. The segment at 812-1036 is CTD-like region; it reads ELPEETLMER…SALCHSTATV (225 aa).

It belongs to the protein kinase superfamily. Ser/Thr protein kinase family. APG1/unc-51/ULK1 subfamily. Interacts with SYNGAP1. Component of a complex consisting of ATG13/KIAA0652, ULK1 and RB1CC1/FIP200. Interacts (via C-terminus) with ATG13/KIAA0652. Associates with the mammalian target of rapamycin complex 1 (mTORC1) through an interaction with RPTOR. Autophosphorylated. In response to nutrient limitation, probably phosphorylated and activated by AMPK, leading to activate autophagy.

Its subcellular location is the cytoplasmic vesicle membrane. The catalysed reaction is L-seryl-[protein] + ATP = O-phospho-L-seryl-[protein] + ADP + H(+). It catalyses the reaction L-threonyl-[protein] + ATP = O-phospho-L-threonyl-[protein] + ADP + H(+). Its function is as follows. Serine/threonine-protein kinase involved in autophagy in response to starvation. Acts upstream of phosphatidylinositol 3-kinase PIK3C3 to regulate the formation of autophagophores, the precursors of autophagosomes. Part of regulatory feedback loops in autophagy: acts both as a downstream effector and a negative regulator of mammalian target of rapamycin complex 1 (mTORC1) via interaction with RPTOR. Activated via phosphorylation by AMPK, also acts as a negative regulator of AMPK through phosphorylation of the AMPK subunits PRKAA1, PRKAB2 and PRKAG1. May phosphorylate ATG13/KIAA0652, FRS2, FRS3 and RPTOR; however such data need additional evidences. Not involved in ammonia-induced autophagy or in autophagic response of cerebellar granule neurons (CGN) to low potassium concentration. Plays a role early in neuronal differentiation and is required for granule cell axon formation: may govern axon formation via Ras-like GTPase signaling and through regulation of the Rab5-mediated endocytic pathways within developing axons. The chain is Serine/threonine-protein kinase ULK2 (ULK2) from Homo sapiens (Human).